We begin with the raw amino-acid sequence, 339 residues long: Quinolinate synthase (339 aa).

Residues histidine 63 and serine 81 each coordinate iminosuccinate. Residue cysteine 126 coordinates [4Fe-4S] cluster. Residues 152–154 and serine 169 each bind iminosuccinate; that span reads YVN. Cysteine 211 provides a ligand contact to [4Fe-4S] cluster. Iminosuccinate contacts are provided by residues 237 to 239 and threonine 254; that span reads HPE. Position 297 (cysteine 297) interacts with [4Fe-4S] cluster.

The protein belongs to the quinolinate synthase family. Type 2 subfamily. Requires [4Fe-4S] cluster as cofactor.

It localises to the cytoplasm. It catalyses the reaction iminosuccinate + dihydroxyacetone phosphate = quinolinate + phosphate + 2 H2O + H(+). It participates in cofactor biosynthesis; NAD(+) biosynthesis; quinolinate from iminoaspartate: step 1/1. Functionally, catalyzes the condensation of iminoaspartate with dihydroxyacetone phosphate to form quinolinate. The sequence is that of Quinolinate synthase from Xylella fastidiosa (strain 9a5c).